A 199-amino-acid chain; its full sequence is Type II secretion system protein J (199 aa).

Residues 1–7 constitute a propeptide, leader sequence; the sequence is MKRTRAG. Phenylalanine 8 bears the N-methylphenylalanine mark. Residues 8–27 traverse the membrane as a helical segment; sequence FTLLEMLVAIAIFASLALMA.

It belongs to the GSP J family. Type II secretion is composed of four main components: the outer membrane complex, the inner membrane complex, the cytoplasmic secretion ATPase and the periplasm-spanning pseudopilus. Interacts with core component GspG. Interacts with pseudopilins GspI and GspK. In terms of processing, cleaved by prepilin peptidase. Methylated by prepilin peptidase at the amino group of the N-terminal phenylalanine once the leader sequence is cleaved by prepilin peptidase.

Its subcellular location is the cell inner membrane. In terms of biological role, component of the type II secretion system required for the energy-dependent secretion of extracellular factors such as proteases and toxins from the periplasm. Part of the pseudopilus tip complex that is critical for the recognition and binding of secretion substrates. The sequence is that of Type II secretion system protein J (gspJ) from Escherichia coli.